Reading from the N-terminus, the 229-residue chain is Transmembrane protein 182 (229 aa).

The signal sequence occupies residues 1 to 26 (MRLNIAIFFGALFGALGVLLFLVAFG). The Extracellular portion of the chain corresponds to 27–114 (SDYWLLATEV…SYDSAVIYRG (88 aa)). An N-linked (GlcNAc...) asparagine glycan is attached at Asn-47. Residues 49 to 59 (TFHHEGFFWRC) form an interaction with ITGB1 region. N-linked (GlcNAc...) asparagine glycosylation is present at Asn-102. The helical transmembrane segment at 115 to 135 (FWAVLMLLGVVAVVIASFLII) threads the bilayer. Over 136–153 (CAAPFASHFLYKAGGGSY) the chain is Cytoplasmic. Residues 154–174 (IAAGILFSLVVMLYVIWVQAV) form a helical membrane-spanning segment. Topologically, residues 175 to 200 (ADMESYRNMKMKDCLDFTPSVLYGWS) are extracellular. A helical transmembrane segment spans residues 201–221 (FFLAPAGIFFSLLAGLLFLVV). Topologically, residues 222–229 (GWHIQIHH) are cytoplasmic.

This sequence belongs to the TMEM182 family. Interacts with ITGB1.

It localises to the cell membrane. Its function is as follows. Negatively regulates myogenesis and skeletal muscle regeneration via its association with ITGB1. Modulates ITGB1 activation by decreasing ITGB1-LAMB1 interaction and inhibiting ITGB1-mediated intracellular signaling during myogenesis. This is Transmembrane protein 182 (TMEM182) from Homo sapiens (Human).